The chain runs to 337 residues: Ketol-acid reductoisomerase (NADP(+)) (337 aa).

The KARI N-terminal Rossmann domain maps to 3 to 183 (IDVFYDDDAD…GGGRAGVIPT (181 aa)). NADP(+) is bound by residues 26-29 (YGSQ), arginine 49, serine 52, serine 54, and 84-87 (DTSQ). Histidine 109 is a catalytic residue. Glycine 135 serves as a coordination point for NADP(+). The KARI C-terminal knotted domain maps to 184 to 329 (TFEAETVTDL…EKLRDLMSWV (146 aa)). Residues aspartate 192, glutamate 196, glutamate 228, and glutamate 232 each contribute to the Mg(2+) site. Serine 253 contacts substrate.

Belongs to the ketol-acid reductoisomerase family. The cofactor is Mg(2+).

It catalyses the reaction (2R)-2,3-dihydroxy-3-methylbutanoate + NADP(+) = (2S)-2-acetolactate + NADPH + H(+). The catalysed reaction is (2R,3R)-2,3-dihydroxy-3-methylpentanoate + NADP(+) = (S)-2-ethyl-2-hydroxy-3-oxobutanoate + NADPH + H(+). Its pathway is amino-acid biosynthesis; L-isoleucine biosynthesis; L-isoleucine from 2-oxobutanoate: step 2/4. It functions in the pathway amino-acid biosynthesis; L-valine biosynthesis; L-valine from pyruvate: step 2/4. In terms of biological role, involved in the biosynthesis of branched-chain amino acids (BCAA). Catalyzes an alkyl-migration followed by a ketol-acid reduction of (S)-2-acetolactate (S2AL) to yield (R)-2,3-dihydroxy-isovalerate. In the isomerase reaction, S2AL is rearranged via a Mg-dependent methyl migration to produce 3-hydroxy-3-methyl-2-ketobutyrate (HMKB). In the reductase reaction, this 2-ketoacid undergoes a metal-dependent reduction by NADPH to yield (R)-2,3-dihydroxy-isovalerate. This is Ketol-acid reductoisomerase (NADP(+)) from Corynebacterium urealyticum (strain ATCC 43042 / DSM 7109).